The chain runs to 271 residues: Undecaprenyl-diphosphatase (271 aa).

Transmembrane regions (helical) follow at residues 5 to 25, 45 to 65, 86 to 106, 114 to 134, 149 to 169, 189 to 209, 226 to 246, and 251 to 271; these read YALF…FLPV, AATF…AVFW, TLSL…GLGI, LFGP…LIIA, ISYK…WPGF, AAEF…GLDL, VGFI…LALI, and FIPF…VFVA.

This sequence belongs to the UppP family.

It is found in the cell inner membrane. It catalyses the reaction di-trans,octa-cis-undecaprenyl diphosphate + H2O = di-trans,octa-cis-undecaprenyl phosphate + phosphate + H(+). Its function is as follows. Catalyzes the dephosphorylation of undecaprenyl diphosphate (UPP). Confers resistance to bacitracin. This is Undecaprenyl-diphosphatase from Aeromonas salmonicida (strain A449).